Here is a 305-residue protein sequence, read N- to C-terminus: Ribosomal RNA small subunit methyltransferase H (305 aa).

S-adenosyl-L-methionine is bound by residues 47 to 49 (GGH), Asp-66, Phe-93, Asp-108, and Gln-115. Residues 280–305 (ASAEEQERNPRSRSAKLRIARKRSES) are disordered. Residues 290 to 305 (RSRSAKLRIARKRSES) show a composition bias toward basic residues.

Belongs to the methyltransferase superfamily. RsmH family.

It is found in the cytoplasm. The enzyme catalyses cytidine(1402) in 16S rRNA + S-adenosyl-L-methionine = N(4)-methylcytidine(1402) in 16S rRNA + S-adenosyl-L-homocysteine + H(+). Functionally, specifically methylates the N4 position of cytidine in position 1402 (C1402) of 16S rRNA. This chain is Ribosomal RNA small subunit methyltransferase H, found in Synechococcus sp. (strain WH7803).